The chain runs to 418 residues: Putative FBD-associated F-box protein At5g56560 (418 aa).

Positions 4-60 (QTRLSDLPDELLLKILSALPMFKVTLATRLISRRWKGPWKLVPDVTFDDDDIPFKSF) constitute an F-box domain. In terms of domain architecture, FBD spans 340-390 (LWEEPAVVAKCLSEHLEIFEWRQYEGTEQERNVAGYILANATCLKMATFST).

The protein is Putative FBD-associated F-box protein At5g56560 of Arabidopsis thaliana (Mouse-ear cress).